The following is a 386-amino-acid chain: Tubulin beta-1 chain (386 aa).

GTP contacts are provided by Glu-7, Ser-76, Gly-80, Thr-81, Gly-82, Asn-142, and Asn-164. Mg(2+) is bound at residue Glu-7. The disordered stretch occupies residues 363-386; the sequence is YQDATADEEGEYEDEEEDLQAEDM. A compositionally biased stretch (acidic residues) spans 367-386; it reads TADEEGEYEDEEEDLQAEDM.

The protein belongs to the tubulin family. As to quaternary structure, dimer of alpha and beta chains. A typical microtubule is a hollow water-filled tube with an outer diameter of 25 nm and an inner diameter of 15 nM. Alpha-beta heterodimers associate head-to-tail to form protofilaments running lengthwise along the microtubule wall with the beta-tubulin subunit facing the microtubule plus end conferring a structural polarity. Microtubules usually have 13 protofilaments but different protofilament numbers can be found in some organisms and specialized cells. It depends on Mg(2+) as a cofactor.

It localises to the cytoplasm. The protein localises to the cytoskeleton. Functionally, tubulin is the major constituent of microtubules, a cylinder consisting of laterally associated linear protofilaments composed of alpha- and beta-tubulin heterodimers. Microtubules grow by the addition of GTP-tubulin dimers to the microtubule end, where a stabilizing cap forms. Below the cap, tubulin dimers are in GDP-bound state, owing to GTPase activity of alpha-tubulin. This Avena sativa (Oat) protein is Tubulin beta-1 chain (TUBB1).